The sequence spans 243 residues: Exosome complex component Rrp41 (243 aa).

Belongs to the RNase PH family. Rrp41 subfamily. Component of the archaeal exosome complex. Forms a hexameric ring-like arrangement composed of 3 Rrp41-Rrp42 heterodimers. The hexameric ring associates with a trimer of Rrp4 and/or Csl4 subunits.

The protein localises to the cytoplasm. Functionally, catalytic component of the exosome, which is a complex involved in RNA degradation. Has 3'-&gt;5' exoribonuclease activity. Can also synthesize heteromeric RNA-tails. The protein is Exosome complex component Rrp41 of Sulfurisphaera tokodaii (strain DSM 16993 / JCM 10545 / NBRC 100140 / 7) (Sulfolobus tokodaii).